The sequence spans 143 residues: Small ribosomal subunit protein eS19y (143 aa).

This sequence belongs to the eukaryotic ribosomal protein eS19 family.

The chain is Small ribosomal subunit protein eS19y (RPS19B) from Arabidopsis thaliana (Mouse-ear cress).